Here is a 443-residue protein sequence, read N- to C-terminus: Chromosomal replication initiator protein DnaA (443 aa).

The interval 1-76 is domain I, interacts with DnaA modulators; sequence METKALWEKL…KSVLNSYVSV (76 aa). A domain II region spans residues 76 to 99; it reads VDFLTKEIFEKNTKKENKKEPINT. A domain III, AAA+ region region spans residues 100 to 320; that stretch reads VLSENALTFE…GLVNRLLFFG (221 aa). Positions 145, 147, 148, and 149 each coordinate ATP. A domain IV, binds dsDNA region spans residues 321–443; that stretch reads IQNDLGHIID…ESLKNEIIGK (123 aa).

This sequence belongs to the DnaA family. Oligomerizes as a right-handed, spiral filament on DNA at oriC.

It localises to the cytoplasm. Functionally, plays an essential role in the initiation and regulation of chromosomal replication. ATP-DnaA binds to the origin of replication (oriC) to initiate formation of the DNA replication initiation complex once per cell cycle. Binds the DnaA box (a 9 base pair repeat at the origin) and separates the double-stranded (ds)DNA. Forms a right-handed helical filament on oriC DNA; dsDNA binds to the exterior of the filament while single-stranded (ss)DNA is stabiized in the filament's interior. The ATP-DnaA-oriC complex binds and stabilizes one strand of the AT-rich DNA unwinding element (DUE), permitting loading of DNA polymerase. After initiation quickly degrades to an ADP-DnaA complex that is not apt for DNA replication. Binds acidic phospholipids. This is Chromosomal replication initiator protein DnaA from Mesoplasma florum (strain ATCC 33453 / NBRC 100688 / NCTC 11704 / L1) (Acholeplasma florum).